The sequence spans 860 residues: Spindle and centriole-associated protein 1 (860 aa).

Disordered regions lie at residues Glu160–Asn200, Gln232–Ala254, and Lys293–Asn330. Residue Thr236 is modified to Phosphothreonine. The span at Thr236–Gly249 shows a compositional bias: low complexity. Over residues Pro308–Asn330 the composition is skewed to polar residues. The stretch at Arg383–Tyr437 forms a coiled coil. A Phosphoserine modification is found at Ser646. Residues Ser729–Gln755 are a coiled coil. Phosphoserine is present on residues Ser765, Ser769, and Ser824. Residues Ile790–Ser860 are disordered. A compositionally biased stretch (low complexity) spans Ser808–Ser824.

Interacts with CEP120.

The protein localises to the cytoplasm. The protein resides in the cytoskeleton. It is found in the microtubule organizing center. It localises to the centrosome. Its subcellular location is the centriole. The protein localises to the spindle. In terms of biological role, regulator required for centriole duplication. for proper bipolar spindle formation and chromosome congression in mitosis. The polypeptide is Spindle and centriole-associated protein 1 (SPICE1) (Bos taurus (Bovine)).